We begin with the raw amino-acid sequence, 442 residues long: MQGLYIKSYGCQMNVYDSLIMENIIKPLGFTVVNEPSEANIVILNTCHIREKASEKLYSELGKMRKIQETKDLTIVVAGCVAQAEGEQIFARAPFVDIVVGPQSIHTLPELIIKARRMKKQVINIDFPIISKFDAIPVEEYTKNQEVSAFISVQEGCNKFCTFCVVPYTRGEEYSRTVEAIFNEALVLSDSGVKEITLIGQNVNAYHGTYKGCEWDLGKLIQYLAKIPNIERIRYTTSHPRDMHQSLYEAHRSETKLMPFVHLPIQSGSDRILKKMNRKHTAEEYIDIINNLRKQRPDIAFSSDFIVGFPGETEEDFEHTMKLVQEVNFSQAYSFKYSPRPGTPSAEYPNQIPEEIKSQRIFRLQELLREQQLAFNRNMIGQTCSVLFNNKKGKFDNQIIGKTEYMQSCYINTDNTNQFYNSILPIKIIDAYQNSVTGIVVN.

The MTTase N-terminal domain occupies 2–117 (QGLYIKSYGC…LPELIIKARR (116 aa)). [4Fe-4S] cluster is bound by residues C11, C47, C80, C157, C161, and C164. A Radical SAM core domain is found at 143-374 (KNQEVSAFIS…QELLREQQLA (232 aa)). Residues 377–442 (RNMIGQTCSV…QNSVTGIVVN (66 aa)) form the TRAM domain.

This sequence belongs to the methylthiotransferase family. MiaB subfamily. As to quaternary structure, monomer. [4Fe-4S] cluster is required as a cofactor.

The protein resides in the cytoplasm. It carries out the reaction N(6)-dimethylallyladenosine(37) in tRNA + (sulfur carrier)-SH + AH2 + 2 S-adenosyl-L-methionine = 2-methylsulfanyl-N(6)-dimethylallyladenosine(37) in tRNA + (sulfur carrier)-H + 5'-deoxyadenosine + L-methionine + A + S-adenosyl-L-homocysteine + 2 H(+). In terms of biological role, catalyzes the methylthiolation of N6-(dimethylallyl)adenosine (i(6)A), leading to the formation of 2-methylthio-N6-(dimethylallyl)adenosine (ms(2)i(6)A) at position 37 in tRNAs that read codons beginning with uridine. This is tRNA-2-methylthio-N(6)-dimethylallyladenosine synthase from Ehrlichia chaffeensis (strain ATCC CRL-10679 / Arkansas).